A 250-amino-acid chain; its full sequence is AA9 family lytic polysaccharide monooxygenase E (250 aa).

The N-terminal stretch at 1–21 (MAMSKIMSLTGLLASASLVAG) is a signal peptide. Cu(2+) contacts are provided by histidine 22 and histidine 107. 2 disulfides stabilise this stretch: cysteine 77–cysteine 199 and cysteine 118–cysteine 122. A glycan (N-linked (GlcNAc...) asparagine) is linked at asparagine 159. Residues histidine 185 and glutamine 194 each coordinate O2. Tyrosine 196 is a Cu(2+) binding site.

Belongs to the polysaccharide monooxygenase AA9 family. Requires Cu(2+) as cofactor.

The protein resides in the secreted. It carries out the reaction [(1-&gt;4)-beta-D-glucosyl]n+m + reduced acceptor + O2 = 4-dehydro-beta-D-glucosyl-[(1-&gt;4)-beta-D-glucosyl]n-1 + [(1-&gt;4)-beta-D-glucosyl]m + acceptor + H2O.. In terms of biological role, lytic polysaccharide monooxygenase (LPMO) that depolymerizes crystalline and amorphous polysaccharides via the oxidation of scissile alpha- or beta-(1-4)-glycosidic bonds, yielding C1 or C4 oxidation products. Catalysis by LPMOs requires the reduction of the active-site copper from Cu(II) to Cu(I) by a reducing agent and H(2)O(2) or O(2) as a cosubstrate. In Aspergillus tamarii, this protein is AA9 family lytic polysaccharide monooxygenase E.